A 70-amino-acid chain; its full sequence is PPF2L antigen (70 aa).

The protein is PPF2L antigen of Plasmodium falciparum (isolate Palo Alto / Uganda).